The following is a 667-amino-acid chain: tRNA 5-methylaminomethyl-2-thiouridine biosynthesis bifunctional protein MnmC (667 aa).

Positions 1 to 241 (MHKLTFAQLS…KREMLCGEKA (241 aa)) are tRNA (mnm(5)s(2)U34)-methyltransferase. The FAD-dependent cmnm(5)s(2)U34 oxidoreductase stretch occupies residues 268–667 (VGGGIASLFV…RKWLKGSKVV (400 aa)).

It in the N-terminal section; belongs to the methyltransferase superfamily. tRNA (mnm(5)s(2)U34)-methyltransferase family. This sequence in the C-terminal section; belongs to the DAO family. It depends on FAD as a cofactor.

Its subcellular location is the cytoplasm. It carries out the reaction 5-aminomethyl-2-thiouridine(34) in tRNA + S-adenosyl-L-methionine = 5-methylaminomethyl-2-thiouridine(34) in tRNA + S-adenosyl-L-homocysteine + H(+). Catalyzes the last two steps in the biosynthesis of 5-methylaminomethyl-2-thiouridine (mnm(5)s(2)U) at the wobble position (U34) in tRNA. Catalyzes the FAD-dependent demodification of cmnm(5)s(2)U34 to nm(5)s(2)U34, followed by the transfer of a methyl group from S-adenosyl-L-methionine to nm(5)s(2)U34, to form mnm(5)s(2)U34. This chain is tRNA 5-methylaminomethyl-2-thiouridine biosynthesis bifunctional protein MnmC, found in Haemophilus ducreyi (strain 35000HP / ATCC 700724).